The following is a 329-amino-acid chain: GTPase Obg (329 aa).

In terms of domain architecture, Obg spans Met-1–Leu-159. Residues Ser-160 to Gln-327 enclose the OBG-type G domain. Residues Gly-166–Ser-173, Phe-191–Thr-195, Asp-212–Gly-215, Thr-279–Asp-282, and Ser-308–Tyr-310 contribute to the GTP site. Mg(2+) contacts are provided by Ser-173 and Thr-193.

It belongs to the TRAFAC class OBG-HflX-like GTPase superfamily. OBG GTPase family. Monomer. The cofactor is Mg(2+).

It is found in the cytoplasm. Functionally, an essential GTPase which binds GTP, GDP and possibly (p)ppGpp with moderate affinity, with high nucleotide exchange rates and a fairly low GTP hydrolysis rate. Plays a role in control of the cell cycle, stress response, ribosome biogenesis and in those bacteria that undergo differentiation, in morphogenesis control. This chain is GTPase Obg, found in Orientia tsutsugamushi (strain Boryong) (Rickettsia tsutsugamushi).